We begin with the raw amino-acid sequence, 231 residues long: MTRYYCEYCHSYLTHDTLSVRKSHLVGKNHLRITADYYRNKARDIINKHNHKRRHIGKRGRKERENSSQNETLKVTCLSNKEKRHIMHVKKMNQKELAQTSIDTLKLLYDGSPGYSKVFVDANRFDIGDLVKASKLPQRANEKSAHHSFKQTSRSRDETCESNPFPRLNNPKKLEPPKILSQWSNTIPKTSIFYSVDILQTTIKESKKRMHSDGIRKPSSANGYKRRRYGN.

The segment at 4–36 (YYCEYCHSYLTHDTLSVRKSHLVGKNHLRITAD) adopts a Matrin-type zinc-finger fold. Positions 49–61 (HNHKRRHIGKRGR) are enriched in basic residues. Disordered regions lie at residues 49–71 (HNHK…SQNE), 137–177 (PQRA…LEPP), and 205–231 (ESKK…RYGN).

It belongs to the U1 small nuclear ribonucleoprotein C family. As to quaternary structure, U1 snRNP is composed of the 7 core Sm proteins SMB1, SMD1, SMD2, SMD3, SME1, SMX3 and SMX2 (Sm proteins B, D1, D2, D3, E, F and G, respectively) that assemble in a heptameric protein ring on the Sm site of the small nuclear RNA to form the core snRNP, and at least 10 U1 snRNP-specific proteins SNP1/U1-70K, MUD1/U1-A, YHC1/U1-C, LUC7, NAM8, PRP39, PRP40, PRP42, SNU56 and SNU71. YHC1/U1-C interacts with U1 snRNA and the 5' splice-site region of the pre-mRNA.

Its subcellular location is the nucleus. Component of the spliceosomal U1 snRNP, which is essential for recognition of the pre-mRNA 5' splice-site and the subsequent assembly of the spliceosome. YHC1/U1-C is directly involved in initial 5' splice-site recognition for both constitutive and regulated alternative splicing. The interaction with the 5' splice-site seems to precede base-pairing between the pre-mRNA and the U1 snRNA. Stimulates commitment or early (E) complex formation by stabilizing the base pairing of the 5' end of the U1 snRNA and the 5' splice-site region. The protein is U1 small nuclear ribonucleoprotein C of Saccharomyces cerevisiae (strain ATCC 204508 / S288c) (Baker's yeast).